A 565-amino-acid chain; its full sequence is Beta-hexosaminidase subunit beta (565 aa).

The N-terminal stretch at 1–13 (MIVLLLLISYCFA) is a signal peptide. Asn71 carries N-linked (GlcNAc...) asparagine glycosylation. Residue Glu347 is the Proton donor of the active site.

The protein belongs to the glycosyl hydrolase 20 family. In terms of assembly, heterodimer of one alpha subunit and one beta subunit. Post-translationally, glycosylated.

The protein resides in the cytoplasmic granule. It is found in the secreted. The catalysed reaction is Hydrolysis of terminal non-reducing N-acetyl-D-hexosamine residues in N-acetyl-beta-D-hexosaminides.. In terms of biological role, hydrolyzes the non-reducing end N-acetyl-D-hexosamine and/or sulfated N-acetyl-D-hexosamine of glycoconjugates. May contribute to amoebic pathogenicity and may be involved in the destruction of extracellular matrix components. This is Beta-hexosaminidase subunit beta from Entamoeba histolytica (strain ATCC 30459 / HM-1:IMSS / ABRM).